The following is a 164-amino-acid chain: 3-hydroxyacyl-[acyl-carrier-protein] dehydratase FabZ (164 aa).

The active site involves histidine 70.

It belongs to the thioester dehydratase family. FabZ subfamily.

It is found in the cytoplasm. The enzyme catalyses a (3R)-hydroxyacyl-[ACP] = a (2E)-enoyl-[ACP] + H2O. Functionally, involved in unsaturated fatty acids biosynthesis. Catalyzes the dehydration of short chain beta-hydroxyacyl-ACPs and long chain saturated and unsaturated beta-hydroxyacyl-ACPs. The polypeptide is 3-hydroxyacyl-[acyl-carrier-protein] dehydratase FabZ (Synechocystis sp. (strain ATCC 27184 / PCC 6803 / Kazusa)).